Consider the following 223-residue polypeptide: Large ribosomal subunit protein uL6c (223 aa).

A chloroplast-targeting transit peptide spans 1 to 41 (MASSLVSSFQPRSAFLGDRNVFKVSSTPFAQVGYSSKTIEC).

It belongs to the universal ribosomal protein uL6 family. As to quaternary structure, part of the 50S ribosomal subunit.

Its subcellular location is the plastid. The protein localises to the chloroplast. Its function is as follows. This protein binds directly to 23S ribosomal RNA and is located at the aminoacyl-tRNA binding site of the peptidyltransferase center. This is Large ribosomal subunit protein uL6c (RPL6) from Arabidopsis thaliana (Mouse-ear cress).